Reading from the N-terminus, the 368-residue chain is Agmatine deiminase (368 aa).

The active-site Amidino-cysteine intermediate is C357.

Belongs to the agmatine deiminase family. Homodimer.

It catalyses the reaction agmatine + H2O = N-carbamoylputrescine + NH4(+). It participates in amine and polyamine biosynthesis; putrescine biosynthesis via agmatine pathway; N-carbamoylputrescine from agmatine: step 1/1. Its function is as follows. Mediates the hydrolysis of agmatine into N-carbamoylputrescine in the arginine decarboxylase (ADC) pathway of putrescine biosynthesis, a basic polyamine. This chain is Agmatine deiminase, found in Stutzerimonas stutzeri (strain A1501) (Pseudomonas stutzeri).